The sequence spans 162 residues: Endoribonuclease YbeY (162 aa).

3 residues coordinate Zn(2+): histidine 118, histidine 122, and histidine 128.

It belongs to the endoribonuclease YbeY family. The cofactor is Zn(2+).

Its subcellular location is the cytoplasm. Single strand-specific metallo-endoribonuclease involved in late-stage 70S ribosome quality control and in maturation of the 3' terminus of the 16S rRNA. This is Endoribonuclease YbeY from Glaesserella parasuis serovar 5 (strain SH0165) (Haemophilus parasuis).